The chain runs to 211 residues: Holliday junction resolvase RecU (211 aa).

Mg(2+)-binding residues include T87, D89, D102, and Q121.

It belongs to the RecU family. Requires Mg(2+) as cofactor.

It is found in the cytoplasm. The enzyme catalyses Endonucleolytic cleavage at a junction such as a reciprocal single-stranded crossover between two homologous DNA duplexes (Holliday junction).. Endonuclease that resolves Holliday junction intermediates in genetic recombination. Cleaves mobile four-strand junctions by introducing symmetrical nicks in paired strands. Promotes annealing of linear ssDNA with homologous dsDNA. Required for DNA repair, homologous recombination and chromosome segregation. The protein is Holliday junction resolvase RecU of Limosilactobacillus fermentum (strain NBRC 3956 / LMG 18251) (Lactobacillus fermentum).